Here is a 323-residue protein sequence, read N- to C-terminus: Arginase-1 (323 aa).

The interval 1–27 (MSSKPKPIEIIGAPFSKGQPRGGVEKG) is disordered. The residue at position 17 (Lys17) is an N6-succinyllysine. A phosphoserine mark is found at Ser62 and Ser72. N6-succinyllysine is present on Lys75. Residues His101, Asp124, His126, and Asp128 each contribute to the Mn(2+) site. Substrate-binding positions include 126-130 (HTDIN) and 137-139 (SGN). At Ser163 the chain carries Phosphoserine. Asp183 serves as a coordination point for substrate. Ser217 carries the phosphoserine modification. 2 residues coordinate Mn(2+): Asp232 and Asp234. Positions 246 and 277 each coordinate substrate. Thr281 bears the Phosphothreonine mark.

This sequence belongs to the arginase family. Homotrimer. Interacts with CMTM6. Mn(2+) is required as a cofactor. In terms of tissue distribution, detected in liver (at protein level).

It is found in the cytoplasm. It localises to the cytoplasmic granule. It carries out the reaction L-arginine + H2O = urea + L-ornithine. It participates in nitrogen metabolism; urea cycle; L-ornithine and urea from L-arginine: step 1/1. Its activity is regulated as follows. Inactivated by diethyl pyrocarbonate (DEPC). Key element of the urea cycle converting L-arginine to urea and L-ornithine, which is further metabolized into metabolites proline and polyamides that drive collagen synthesis and bioenergetic pathways critical for cell proliferation, respectively; the urea cycle takes place primarily in the liver and, to a lesser extent, in the kidneys. In terms of biological role, functions in L-arginine homeostasis in nonhepatic tissues characterized by the competition between nitric oxide synthase (NOS) and arginase for the available intracellular substrate arginine. Arginine metabolism is a critical regulator of innate and adaptive immune responses. Involved in an antimicrobial effector pathway in polymorphonuclear granulocytes (PMN). Upon PMN cell death is liberated from the phagolysosome and depletes arginine in the microenvironment leading to suppressed T cell and natural killer (NK) cell proliferation and cytokine secretion. In group 2 innate lymphoid cells (ILC2s) promotes acute type 2 inflammation in the lung and is involved in optimal ILC2 proliferation but not survival. Plays a role in the immune response of alternatively activated or M2 macrophages in processes such as wound healing and tissue regeneration, immune defense against multicellular pathogens and parasites, and immune suppression and allergic inflammation; the regulatory outcome seems to be organ specific. In tumor-infiltrating dendritic cells (DCs) and myeloid-derived suppressor cells (MDSCs) plays a role in suppression of T cell-mediated antitumor immunity. The sequence is that of Arginase-1 (Arg1) from Rattus norvegicus (Rat).